A 376-amino-acid polypeptide reads, in one-letter code: Chaperone protein DnaJ (376 aa).

The region spanning 5–70 (DYYEILGVSK…QKRAAYDQYG (66 aa)) is the J domain. The CR-type zinc finger occupies 131 to 209 (GVTKEIRIPT…CHGHGRVERS (79 aa)). 8 residues coordinate Zn(2+): Cys-144, Cys-147, Cys-161, Cys-164, Cys-183, Cys-186, Cys-197, and Cys-200. CXXCXGXG motif repeat units lie at residues 144-151 (CDVCHGSG), 161-168 (CPTCHGSG), 183-190 (CPHCQGRG), and 197-204 (CNKCHGHG).

Belongs to the DnaJ family. As to quaternary structure, homodimer. Zn(2+) serves as cofactor.

The protein localises to the cytoplasm. Its function is as follows. Participates actively in the response to hyperosmotic and heat shock by preventing the aggregation of stress-denatured proteins and by disaggregating proteins, also in an autonomous, DnaK-independent fashion. Unfolded proteins bind initially to DnaJ; upon interaction with the DnaJ-bound protein, DnaK hydrolyzes its bound ATP, resulting in the formation of a stable complex. GrpE releases ADP from DnaK; ATP binding to DnaK triggers the release of the substrate protein, thus completing the reaction cycle. Several rounds of ATP-dependent interactions between DnaJ, DnaK and GrpE are required for fully efficient folding. Also involved, together with DnaK and GrpE, in the DNA replication of plasmids through activation of initiation proteins. In Shigella flexneri serotype 5b (strain 8401), this protein is Chaperone protein DnaJ.